The sequence spans 382 residues: Galactokinase (382 aa).

34–37 (EHTD) lines the substrate pocket. 124-130 (GAGLSSS) provides a ligand contact to ATP. Mg(2+) is bound by residues Ser130 and Glu162. Catalysis depends on Asp174, which acts as the Proton acceptor. Position 223 (Tyr223) interacts with substrate.

The protein belongs to the GHMP kinase family. GalK subfamily.

Its subcellular location is the cytoplasm. It catalyses the reaction alpha-D-galactose + ATP = alpha-D-galactose 1-phosphate + ADP + H(+). Its pathway is carbohydrate metabolism; galactose metabolism. Catalyzes the transfer of the gamma-phosphate of ATP to D-galactose to form alpha-D-galactose-1-phosphate (Gal-1-P). This Escherichia coli O17:K52:H18 (strain UMN026 / ExPEC) protein is Galactokinase.